The following is a 468-amino-acid chain: bZIP transcription factor 14 (468 aa).

2 disordered regions span residues 55-149 and 234-272; these read SRRK…EGRA and SPQS…LGKD. Low complexity-rich tracts occupy residues 64–82 and 95–106; these read SFVS…SSGS and VTAASTESVSSS. The segment covering 112-128 has biased composition (basic and acidic residues); sequence KKADTDDRVQRSRERNR. Residues 117–165 form the bZIP 1 domain; sequence DDRVQRSRERNRIHARKTRQRKKEQMQSLEGRATDLKHEQIRLKQIINE. The basic motif 1 stretch occupies residues 119–139; it reads RVQRSRERNRIHARKTRQRKK. A compositionally biased stretch (basic residues) spans 129–138; the sequence is IHARKTRQRK. Residues 145–159 are leucine-zipper 1; sequence LEGRATDLKHEQIRL. The span at 247–256 shows a compositional bias: polar residues; sequence ASTSDVSGDE. The bZIP 2 domain maps to 279-333; that stretch reads EELDQIRRERNRMHAKRTRDRKRIFTEEMAEMCRILEEENHLLRVHLGGLDSDFK. Residues 285 to 312 form a basic motif 2 region; that stretch reads RRERNRMHAKRTRDRKRIFTEEMAEMCR. A leucine-zipper 2 region spans residues 313-320; sequence ILEEENHL. Residues 400 to 468 are disordered; the sequence is ERQQREAERK…TTSLAAPVGW (69 aa). Over residues 401–410 the composition is skewed to basic and acidic residues; that stretch reads RQQREAERKV. Over residues 417 to 426 the composition is skewed to low complexity; sequence SAASDTSTSD.

It belongs to the bZIP family.

Its subcellular location is the nucleus. In terms of biological role, transcriptional activator which binds to the C-box-like motif 5'-TGACGT-3' and A-box-like motif 5'-GTACGTA-3' of target promoters to positively regulate the expression of genes involved in the tricarboxylic acid (TCA) cycle in response to nitrogen starvation. May also regulate the TCA cycle during day-to-night transitions. The chain is bZIP transcription factor 14 from Phaeodactylum tricornutum (strain CCAP 1055/1).